Reading from the N-terminus, the 303-residue chain is uncharacterized protein (303 aa).

Residues 7-12 (GAGGVG) and N101 contribute to the NADP(+) site. K184 (proton donor) is an active-site residue. Position 267 (E267) interacts with NADP(+).

The protein belongs to the ketopantoate reductase family.

This is an uncharacterized protein from Bacillus subtilis (strain 168).